An 840-amino-acid polypeptide reads, in one-letter code: Heat shock 70 kDa protein 4 (840 aa).

An N6-acetyllysine modification is found at K53. Phosphoserine is present on S76. A phosphotyrosine mark is found at Y89 and Y336. Residues S393 and S415 each carry the phosphoserine modification. At K430 the chain carries N6-acetyllysine. A disordered region spans residues V500–S575. The segment covering Q514–E533 has biased composition (basic and acidic residues). Residue T538 is modified to Phosphothreonine. Phosphoserine is present on residues S546 and S647. Y660 carries the post-translational modification Phosphotyrosine. K679 is subject to N6-acetyllysine. At S756 the chain carries Phosphoserine. An N6-methyllysine modification is found at K773. Residues C779–D840 form a disordered region. Basic and acidic residues-rich tracts occupy residues P788–N799 and D829–D840.

Belongs to the heat shock protein 70 family. In terms of assembly, interacts with TJP1/ZO-1.

The protein localises to the cytoplasm. The chain is Heat shock 70 kDa protein 4 (HSPA4) from Homo sapiens (Human).